A 219-amino-acid polypeptide reads, in one-letter code: Dehydration-responsive element-binding protein 1F (219 aa).

The disordered stretch occupies residues 1–45 (MDTEDTSSASSSSVSPPSSPGGGHHHRLPPKRRAGRKKFRETRHP). Low complexity predominate over residues 7-16 (SSASSSSVSP). Positions 23–41 (GHHHRLPPKRRAGRKKFRE) are enriched in basic residues. Residues 46–105 (VYRGVRARAGGSRWVCEVREPQAQARIWLGTYPTPEMAARAHDVAAIALRGERGAELNFP) constitute a DNA-binding region (AP2/ERF). The tract at residues 134–161 (RRPPPPLALPEDPQEGTSGGGATATSGR) is disordered.

Belongs to the AP2/ERF transcription factor family. ERF subfamily. As to expression, mostly expressed in developing seeds and apices.

Its subcellular location is the nucleus. Transcriptional activator that binds specifically to the DNA sequence 5'-[AG]CCGAC-3'. Binding to the C-repeat/DRE element mediates high salinity- and dehydration-inducible transcription. The chain is Dehydration-responsive element-binding protein 1F (DREB1F) from Oryza sativa subsp. indica (Rice).